Reading from the N-terminus, the 158-residue chain is Methylglyoxal synthase (158 aa).

Residues Met-1–Glu-158 enclose the MGS-like domain. Residues His-12, Lys-16, Thr-38–Thr-41, and Ser-63–Gly-64 each bind substrate. Catalysis depends on Asp-69, which acts as the Proton donor/acceptor. His-96 contacts substrate.

The protein belongs to the methylglyoxal synthase family.

The enzyme catalyses dihydroxyacetone phosphate = methylglyoxal + phosphate. Its function is as follows. Catalyzes the formation of methylglyoxal from dihydroxyacetone phosphate. The polypeptide is Methylglyoxal synthase (Treponema socranskii).